Reading from the N-terminus, the 105-residue chain is Endogenous retrovirus group K member 16 Rec protein (105 aa).

The interval Met1–Ser41 is disordered. The segment covering Ala10 to Arg20 has biased composition (basic residues). A Nuclear localization signal motif is present at residues Arg13–Arg20. The Nuclear export signal signature appears at Trp50–Leu59.

In terms of assembly, forms homodimers, homotrimers, and homotetramers via a C-terminal domain. Associates with XPO1 and with ZNF145.

The protein localises to the cytoplasm. It localises to the nucleus. Its subcellular location is the nucleolus. Its function is as follows. Retroviral replication requires the nuclear export and translation of unspliced, singly-spliced and multiply-spliced derivatives of the initial genomic transcript. Rec interacts with a highly structured RNA element (RcRE) present in the viral 3'LTR and recruits the cellular nuclear export machinery. This permits export to the cytoplasm of unspliced genomic or incompletely spliced subgenomic viral transcripts. The polypeptide is Endogenous retrovirus group K member 16 Rec protein (ERVK-16) (Homo sapiens (Human)).